We begin with the raw amino-acid sequence, 224 residues long: Oxaloacetate tautomerase FAHD2, mitochondrial (224 aa).

A mitochondrion-targeting transit peptide spans 1–30 (MATSMIQRLFKQGTKIVGVGLNYASHAKEL). The Mg(2+) site is built by E67, E69, and D98.

This sequence belongs to the FAH family. Mg(2+) serves as cofactor. It depends on Mn(2+) as a cofactor.

It localises to the mitochondrion. The catalysed reaction is oxaloacetate = enol-oxaloacetate. In terms of biological role, tautomerase that converts enol-oxaloacetate, a strong inhibitor of succinate dehydrogenase, to the physiological keto form of oxaloacetate. The chain is Oxaloacetate tautomerase FAHD2, mitochondrial from Arabidopsis thaliana (Mouse-ear cress).